A 662-amino-acid polypeptide reads, in one-letter code: Potassium channel KAT3 (662 aa).

At 1 to 90 (MSTTTTEARS…HFDRRYRLWE (90 aa)) the chain is on the cytoplasmic side. The chain crosses the membrane as a helical span at residues 91–111 (LFLVILVGYSAWASLFELAFE). At 112–118 (KAAEGAL) the chain is on the extracellular side. Residues 119–139 (LTIDLVVDFFFAVDIILTFFV) traverse the membrane as a helical segment. The Cytoplasmic portion of the chain corresponds to 140 to 163 (SYLDNTTYLNVTDHKLIAKRYLKS). The chain crosses the membrane as a helical span at residues 164–184 (VAFVMDVASTLPIQFIYKTIT). Over 185 to 194 (GDVGRGQAFG) the chain is Extracellular. The helical; Voltage-sensor transmembrane segment at 195–215 (FLNLLRLWRLRRVAELFKRLE) threads the bilayer. Residues 216 to 229 (KDAHFNYFVIRVIK) are Cytoplasmic-facing. Residues 230–250 (LLCVTIFWIHLAGCILYWIAY) form a helical membrane-spanning segment. Over 251-277 (HYPRPTDTWIGSQVEDFKERSVWLGYT) the chain is Extracellular. The segment at residues 278 to 297 (YSMYWSIVTLTTVGYGDLHA) is an intramembrane region (pore-forming). Topologically, residues 298–301 (VNSR) are extracellular. The helical transmembrane segment at 302-322 (EKTFNMFYMLFNIGLTSYIIG) threads the bilayer. Residues 323–662 (IMTNLVVHGA…LRENDHLYIF (340 aa)) are Cytoplasmic-facing. Position 406-527 (406-527 (LFKGFPEGLL…MIIANFMTYL (122 aa))) interacts with a nucleoside 3',5'-cyclic phosphate. Positions 528 to 558 (KGLNDELKKEIPFLRDLLDDADAQVQETVQS) form a coiled coil. A KHA domain is found at 591-662 (RVIIHGQAPP…LRENDHLYIF (72 aa)).

It belongs to the potassium channel family. Plant (TC 1.A.1.4) subfamily. In terms of assembly, the potassium channel is probably composed of a homo- or heterotetrameric complex of pore-forming subunits. May interact with AKT1 and AKT2. Interacts with SLAC1. Expressed predominantly in root hairs and root endodermis and, at a lower level, in leaf nodes, trichomes, and hydathodes.

The protein resides in the membrane. Probable modulatory (alpha) subunit of inward-rectifying potassium channels. Could mediate potassium uptake from the soil solution by plant roots in association with AKT1. In Arabidopsis thaliana (Mouse-ear cress), this protein is Potassium channel KAT3 (KAT3).